A 262-amino-acid chain; its full sequence is Hydroxyethylthiazole kinase (262 aa).

Methionine 50 serves as a coordination point for substrate. ATP is bound by residues arginine 125 and threonine 171. Glycine 198 contacts substrate.

This sequence belongs to the Thz kinase family. Mg(2+) serves as cofactor.

The catalysed reaction is 5-(2-hydroxyethyl)-4-methylthiazole + ATP = 4-methyl-5-(2-phosphooxyethyl)-thiazole + ADP + H(+). The protein operates within cofactor biosynthesis; thiamine diphosphate biosynthesis; 4-methyl-5-(2-phosphoethyl)-thiazole from 5-(2-hydroxyethyl)-4-methylthiazole: step 1/1. In terms of biological role, catalyzes the phosphorylation of the hydroxyl group of 4-methyl-5-beta-hydroxyethylthiazole (THZ). The polypeptide is Hydroxyethylthiazole kinase (Escherichia coli O6:K15:H31 (strain 536 / UPEC)).